Here is a 260-residue protein sequence, read N- to C-terminus: Recombination-promoting nuclease RpnD (260 aa).

Belongs to the Rpn/YhgA-like nuclease family.

A low activity DNA endonuclease probably yielding 3'-hydroxyl ends. Involved in RecA-independent recombination and horizontal gene transfer. The polypeptide is Recombination-promoting nuclease RpnD (rpnD) (Escherichia coli O157:H7).